The chain runs to 151 residues: Melatonin receptor type 1C (151 aa).

Residues Cys-1–Arg-13 lie on the Cytoplasmic side of the membrane. A helical membrane pass occupies residues Asn-14–Phe-34. Residues Leu-35–Tyr-58 lie on the Extracellular side of the membrane. Residues Thr-59–Leu-79 traverse the membrane as a helical segment. Over Arg-80 to Met-109 the chain is Cytoplasmic. The helical transmembrane segment at Phe-110–Val-130 threads the bilayer. The Extracellular portion of the chain corresponds to Ala-131–Glu-143. A helical membrane pass occupies residues Trp-144–Phe-151.

It belongs to the G-protein coupled receptor 1 family.

It is found in the cell membrane. Functionally, high affinity receptor for melatonin. The activity of this receptor is mediated by pertussis toxin sensitive G proteins that inhibits adenylate cyclase activity. This Danio rerio (Zebrafish) protein is Melatonin receptor type 1C (mtnr1c).